A 137-amino-acid chain; its full sequence is uncharacterized protein (137 aa).

Belongs to the DCC thiol-disulfide oxidoreductase family.

This is an uncharacterized protein from Bacillus subtilis (strain 168).